Here is a 134-residue protein sequence, read N- to C-terminus: Small ribosomal subunit protein uS12 (134 aa).

Asp-89 carries the 3-methylthioaspartic acid modification. The disordered stretch occupies residues 109-134 (KRNVSRSKYGAKKGKAGAAPTTGKKK). Residues 111-123 (NVSRSKYGAKKGK) show a composition bias toward basic residues. Low complexity predominate over residues 124-134 (AGAAPTTGKKK).

This sequence belongs to the universal ribosomal protein uS12 family. Part of the 30S ribosomal subunit. Contacts proteins S8 and S17. May interact with IF1 in the 30S initiation complex.

Its function is as follows. With S4 and S5 plays an important role in translational accuracy. In terms of biological role, interacts with and stabilizes bases of the 16S rRNA that are involved in tRNA selection in the A site and with the mRNA backbone. Located at the interface of the 30S and 50S subunits, it traverses the body of the 30S subunit contacting proteins on the other side and probably holding the rRNA structure together. The combined cluster of proteins S8, S12 and S17 appears to hold together the shoulder and platform of the 30S subunit. The sequence is that of Small ribosomal subunit protein uS12 from Wolinella succinogenes (strain ATCC 29543 / DSM 1740 / CCUG 13145 / JCM 31913 / LMG 7466 / NCTC 11488 / FDC 602W) (Vibrio succinogenes).